The following is a 371-amino-acid chain: Cell division cycle-associated protein 7 (371 aa).

2 disordered regions span residues 60-110 (TRSQ…EDES) and 140-188 (PGSF…SRIL). Polar residues predominate over residues 94–103 (PSENSVTDSN). The residue at position 142 (S142) is a Phosphoserine. Residues 146–170 (RHPLPGSDSQSRRPRRRTFPGVASR) are interaction with MYC. Positions 160–176 (RRRTFPGVASRRNPERR) match the Nuclear localization signal motif. A Phosphothreonine modification is found at T163. Residue S190 is modified to Phosphoserine. K204 is covalently cross-linked (Glycyl lysine isopeptide (Lys-Gly) (interchain with G-Cter in SUMO2)). The interval 247-371 (EEELENVCSN…SLKQEFEMQA (125 aa)) is mediates transcriptional activity.

Interacts with MYC (via C-terminus), YWHAE and YWHAZ. Post-translationally, phosphorylation at Thr-163 promotes interaction with YWHAE and YWHAZ, dissociation from MYC and sequestration in the cytoplasm. In vitro, phosphorylated at Thr-163 by AKT. Ubiquitous with higher level in thymus and small intestine. Overexpressed in a large number of tumors, in blood from patients with acute myelogenous leukemia (AML) and in chronic myelogenous leukemia (CML) blast crisis.

The protein resides in the nucleus. Its subcellular location is the cytoplasm. Functionally, participates in MYC-mediated cell transformation and apoptosis; induces anchorage-independent growth and clonogenicity in lymphoblastoid cells. Insufficient to induce tumorigenicity when overexpressed but contributes to MYC-mediated tumorigenesis. May play a role as transcriptional regulator. The polypeptide is Cell division cycle-associated protein 7 (CDCA7) (Homo sapiens (Human)).